The primary structure comprises 93 residues: Serine rich endogenous peptide 6 (93 aa).

Residues 1-27 form the signal peptide; that stretch reads MGTKCYSKLRYVVVLVLLLFVFPCSLS. Short sequence motifs (SCOOP motif) lie at residues 48–62 and 73–87; these read GIIAGSSPSGQAPNI and ISEARPSKSKKGGGR. Residues 52–93 form a disordered region; the sequence is GSSPSGQAPNINNNYHGRRLMISEARPSKSKKGGGREPESPG. The span at 53–66 shows a compositional bias: polar residues; the sequence is SSPSGQAPNINNNY. 2 short sequence motifs (sxS motif essential for MIK2 binding) span residues 54-56 and 79-81; these read SPS and SKS.

It belongs to the serine rich endogenous peptide (SCOOP) phytocytokine family. Interacts with MIK2 (via extracellular leucine-rich repeat domain); this interaction triggers the formation of complex between MIK2 and the BAK1/SERK3 and SERK4 coreceptors, and subsequent BAK1 activation by phosphorylation. As to expression, mostly expressed in seedlings shoots, and, to a lower extent, in roots.

It is found in the cell membrane. The protein localises to the secreted. The protein resides in the extracellular space. It localises to the apoplast. In terms of biological role, brassicaceae-specific phytocytokine (plant endogenous peptide released into the apoplast) perceived by MIK2 in a BAK1/SERK3 and SERK4 coreceptors-dependent manner, that modulates various physiological and antimicrobial processes including growth prevention and reactive oxygen species (ROS) response regulation. Inhibits root growth. The protein is Serine rich endogenous peptide 6 of Arabidopsis thaliana (Mouse-ear cress).